We begin with the raw amino-acid sequence, 89 residues long: Small ribosomal subunit protein uS15 (89 aa).

This sequence belongs to the universal ribosomal protein uS15 family. Part of the 30S ribosomal subunit. Forms a bridge to the 50S subunit in the 70S ribosome, contacting the 23S rRNA.

In terms of biological role, one of the primary rRNA binding proteins, it binds directly to 16S rRNA where it helps nucleate assembly of the platform of the 30S subunit by binding and bridging several RNA helices of the 16S rRNA. Functionally, forms an intersubunit bridge (bridge B4) with the 23S rRNA of the 50S subunit in the ribosome. The chain is Small ribosomal subunit protein uS15 from Orientia tsutsugamushi (strain Ikeda) (Rickettsia tsutsugamushi).